The primary structure comprises 296 residues: Lipoyl synthase (296 aa).

[4Fe-4S] cluster contacts are provided by C38, C43, C49, C64, C68, C71, and S279. The Radical SAM core domain maps to 50–268 (WDGGCLTFMV…AEYGRSLGFK (219 aa)).

The protein belongs to the radical SAM superfamily. Lipoyl synthase family. [4Fe-4S] cluster is required as a cofactor.

It is found in the cytoplasm. It carries out the reaction [[Fe-S] cluster scaffold protein carrying a second [4Fe-4S](2+) cluster] + N(6)-octanoyl-L-lysyl-[protein] + 2 oxidized [2Fe-2S]-[ferredoxin] + 2 S-adenosyl-L-methionine + 4 H(+) = [[Fe-S] cluster scaffold protein] + N(6)-[(R)-dihydrolipoyl]-L-lysyl-[protein] + 4 Fe(3+) + 2 hydrogen sulfide + 2 5'-deoxyadenosine + 2 L-methionine + 2 reduced [2Fe-2S]-[ferredoxin]. It participates in protein modification; protein lipoylation via endogenous pathway; protein N(6)-(lipoyl)lysine from octanoyl-[acyl-carrier-protein]: step 2/2. Its function is as follows. Catalyzes the radical-mediated insertion of two sulfur atoms into the C-6 and C-8 positions of the octanoyl moiety bound to the lipoyl domains of lipoate-dependent enzymes, thereby converting the octanoylated domains into lipoylated derivatives. In Methanocella arvoryzae (strain DSM 22066 / NBRC 105507 / MRE50), this protein is Lipoyl synthase.